Here is a 427-residue protein sequence, read N- to C-terminus: Enolase (427 aa).

Gln163 contributes to the (2R)-2-phosphoglycerate binding site. The active-site Proton donor is the Glu205. The Mg(2+) site is built by Asp242, Glu285, and Asp312. Positions 337, 366, 367, and 388 each coordinate (2R)-2-phosphoglycerate. The active-site Proton acceptor is the Lys337.

The protein belongs to the enolase family. It depends on Mg(2+) as a cofactor.

The protein localises to the cytoplasm. It is found in the secreted. The protein resides in the cell surface. It carries out the reaction (2R)-2-phosphoglycerate = phosphoenolpyruvate + H2O. The protein operates within carbohydrate degradation; glycolysis; pyruvate from D-glyceraldehyde 3-phosphate: step 4/5. Its function is as follows. Catalyzes the reversible conversion of 2-phosphoglycerate (2-PG) into phosphoenolpyruvate (PEP). It is essential for the degradation of carbohydrates via glycolysis. This is Enolase from Bradyrhizobium sp. (strain ORS 278).